We begin with the raw amino-acid sequence, 277 residues long: Ethanolamine ammonia-lyase small subunit (277 aa).

V164, E185, and C214 together coordinate adenosylcob(III)alamin.

Belongs to the EutC family. As to quaternary structure, the basic unit is a heterodimer which dimerizes to form tetramers. The heterotetramers trimerize; 6 large subunits form a core ring with 6 small subunits projecting outwards. Requires adenosylcob(III)alamin as cofactor.

Its subcellular location is the bacterial microcompartment. The enzyme catalyses ethanolamine = acetaldehyde + NH4(+). The protein operates within amine and polyamine degradation; ethanolamine degradation. Functionally, catalyzes the deamination of various vicinal amino-alcohols to oxo compounds. Allows this organism to utilize ethanolamine as the sole source of nitrogen and carbon in the presence of external vitamin B12. The protein is Ethanolamine ammonia-lyase small subunit of Pseudomonas fluorescens (strain SBW25).